A 141-amino-acid chain; its full sequence is Large ribosomal subunit protein uL11 (141 aa).

Belongs to the universal ribosomal protein uL11 family. Part of the ribosomal stalk of the 50S ribosomal subunit. Interacts with L10 and the large rRNA to form the base of the stalk. L10 forms an elongated spine to which L12 dimers bind in a sequential fashion forming a multimeric L10(L12)X complex. In terms of processing, one or more lysine residues are methylated.

In terms of biological role, forms part of the ribosomal stalk which helps the ribosome interact with GTP-bound translation factors. In Prochlorococcus marinus (strain MIT 9312), this protein is Large ribosomal subunit protein uL11.